The following is a 298-amino-acid chain: Aspartate carbamoyltransferase catalytic subunit (298 aa).

The carbamoyl phosphate site is built by arginine 50 and threonine 51. Lysine 79 provides a ligand contact to L-aspartate. 3 residues coordinate carbamoyl phosphate: arginine 100, histidine 128, and glutamine 131. The L-aspartate site is built by arginine 160 and arginine 221. Carbamoyl phosphate is bound by residues leucine 260 and proline 261.

This sequence belongs to the aspartate/ornithine carbamoyltransferase superfamily. ATCase family. As to quaternary structure, heterooligomer of catalytic and regulatory chains.

The catalysed reaction is carbamoyl phosphate + L-aspartate = N-carbamoyl-L-aspartate + phosphate + H(+). It functions in the pathway pyrimidine metabolism; UMP biosynthesis via de novo pathway; (S)-dihydroorotate from bicarbonate: step 2/3. Its function is as follows. Catalyzes the condensation of carbamoyl phosphate and aspartate to form carbamoyl aspartate and inorganic phosphate, the committed step in the de novo pyrimidine nucleotide biosynthesis pathway. The polypeptide is Aspartate carbamoyltransferase catalytic subunit (Methanosphaerula palustris (strain ATCC BAA-1556 / DSM 19958 / E1-9c)).